The chain runs to 149 residues: Transcriptional repressor NrdR (149 aa).

A zinc finger spans residues 3 to 34 (CPFCFAVDTKVIDSRLVGEGSSVRRRRQCLVC). One can recognise an ATP-cone domain in the interval 49–139 (PRVIKSNDVR…VYRSFEDIKD (91 aa)).

It belongs to the NrdR family. It depends on Zn(2+) as a cofactor.

Negatively regulates transcription of bacterial ribonucleotide reductase nrd genes and operons by binding to NrdR-boxes. The chain is Transcriptional repressor NrdR from Salmonella schwarzengrund (strain CVM19633).